Consider the following 148-residue polypeptide: Transcriptional repressor NrdR (148 aa).

A zinc finger lies at 3 to 34 (CPFCHNEDTQVLDTRVSDEGDTIRRRRRCAKC). Residues 49–139 (PAIVKKNGSR…VYRSFADIES (91 aa)) enclose the ATP-cone domain.

The protein belongs to the NrdR family. It depends on Zn(2+) as a cofactor.

Its function is as follows. Negatively regulates transcription of bacterial ribonucleotide reductase nrd genes and operons by binding to NrdR-boxes. The sequence is that of Transcriptional repressor NrdR from Polynucleobacter necessarius subsp. necessarius (strain STIR1).